The chain runs to 137 residues: Large ribosomal subunit protein uL16 (137 aa).

This sequence belongs to the universal ribosomal protein uL16 family. As to quaternary structure, part of the 50S ribosomal subunit.

In terms of biological role, binds 23S rRNA and is also seen to make contacts with the A and possibly P site tRNAs. The chain is Large ribosomal subunit protein uL16 from Brucella abortus (strain S19).